Here is a 164-residue protein sequence, read N- to C-terminus: Putative pre-16S rRNA nuclease (164 aa).

Belongs to the YqgF nuclease family.

It is found in the cytoplasm. Its function is as follows. Could be a nuclease involved in processing of the 5'-end of pre-16S rRNA. The chain is Putative pre-16S rRNA nuclease from Rhizobium rhizogenes (strain K84 / ATCC BAA-868) (Agrobacterium radiobacter).